The chain runs to 347 residues: DNA-directed RNA polymerase subunit alpha (347 aa).

The interval 1–230 is alpha N-terminal domain (alpha-NTD); that stretch reads MFKGFQKPKR…DHMTIFINFE (230 aa). Residues 247 to 347 are alpha C-terminal domain (alpha-CTD); that stretch reads MNEVLNRSVE…EDDGQDQIGE (101 aa). A disordered region spans residues 320–347; that stretch reads GRLVAPPPSAGGGPDFGPEDDGQDQIGE. The segment covering 336–347 has biased composition (acidic residues); it reads GPEDDGQDQIGE.

It belongs to the RNA polymerase alpha chain family. Homodimer. The RNAP catalytic core consists of 2 alpha, 1 beta, 1 beta' and 1 omega subunit. When a sigma factor is associated with the core the holoenzyme is formed, which can initiate transcription.

It carries out the reaction RNA(n) + a ribonucleoside 5'-triphosphate = RNA(n+1) + diphosphate. Functionally, DNA-dependent RNA polymerase catalyzes the transcription of DNA into RNA using the four ribonucleoside triphosphates as substrates. The sequence is that of DNA-directed RNA polymerase subunit alpha from Solibacter usitatus (strain Ellin6076).